Consider the following 506-residue polypeptide: Maturase K (506 aa).

It belongs to the intron maturase 2 family. MatK subfamily.

The protein localises to the plastid. It localises to the chloroplast. Its function is as follows. Usually encoded in the trnK tRNA gene intron. Probably assists in splicing its own and other chloroplast group II introns. The chain is Maturase K from Lathyrus sativus (White vetchling).